Here is a 167-residue protein sequence, read N- to C-terminus: MVFKTLRRTLWLTLAALLAVFQFNLGAAQAAELTAETRTVKLNPQGDNVTLSLKQVAEGKQLFAYACGQCHVGGITKTDPNVGLDPEALALATPPRDSVESLVDYLHNPTTYDGEREISELHPSTKSTDIFPKMRNLTEDDLVAISGHILLQPKIVGTKWGGGKIYY.

Residues 1-30 (MVFKTLRRTLWLTLAALLAVFQFNLGAAQA) form the signal peptide. Heme c-binding residues include C67, C70, H71, and H122.

Belongs to the cytochrome c family. PsbV subfamily. As to quaternary structure, PSII is composed of 1 copy each of membrane proteins PsbA, PsbB, PsbC, PsbD, PsbE, PsbF, PsbH, PsbI, PsbJ, PsbK, PsbL, PsbM, PsbT, PsbX, PsbY, PsbZ, Psb30/Ycf12, peripheral proteins PsbO, CyanoQ (PsbQ), PsbU, PsbV and a large number of cofactors. It forms dimeric complexes. Heme c is required as a cofactor.

The protein localises to the cellular thylakoid membrane. One of the extrinsic, lumenal subunits of photosystem II (PSII). PSII is a light-driven water plastoquinone oxidoreductase, using light energy to abstract electrons from H(2)O, generating a proton gradient subsequently used for ATP formation. The extrinsic proteins stabilize the structure of photosystem II oxygen-evolving complex (OEC), the ion environment of oxygen evolution and protect the OEC against heat-induced inactivation. Low-potential cytochrome c that plays a role in the OEC of PSII. In Synechococcus elongatus (strain ATCC 33912 / PCC 7942 / FACHB-805) (Anacystis nidulans R2), this protein is Photosystem II extrinsic protein V.